The sequence spans 454 residues: Histidine--tRNA ligase (454 aa).

The protein belongs to the class-II aminoacyl-tRNA synthetase family. In terms of assembly, homodimer.

Its subcellular location is the cytoplasm. It catalyses the reaction tRNA(His) + L-histidine + ATP = L-histidyl-tRNA(His) + AMP + diphosphate + H(+). The sequence is that of Histidine--tRNA ligase from Bacteroides fragilis (strain YCH46).